The following is a 780-amino-acid chain: Striatin (780 aa).

Residues 53-120 (LHFLQHEWAR…QERAKYHKLK (68 aa)) are a coiled coil. The tract at residues 55–63 (FLQHEWARF) is caveolin-binding. The disordered stretch occupies residues 124–150 (ELNQGDMKPPSYDSDEGNETEVQPQQN). Serine 137 carries the phosphoserine modification. The interval 149-166 (QNSQLMWKQGRQLLRQYL) is calmodulin-binding. The residue at position 225 (threonine 225) is a Phosphothreonine. Residues serine 227, serine 229, serine 245, and serine 259 each carry the phosphoserine modification. Disordered stretches follow at residues 289-310 (DFLV…GTDW) and 365-387 (DELP…RLPE). Positions 299–310 (NESRSAGDGTDW) are enriched in basic and acidic residues. 6 WD repeats span residues 461–500 (SHFD…PAKK), 514–553 (AHKG…IDPY), 567–606 (GHTD…PALS), 662–701 (NSSC…LIHS), 704–743 (AHLE…CIQE), and 750–780 (KFEE…KVFV).

It belongs to the WD repeat striatin family. Part of the core of STRIPAK complexes composed of PP2A catalytic and scaffolding subunits, the striatins (PP2A regulatory subunits), the striatin-associated proteins MOB4, STRIP1 and STRIP2, PDCD10 and members of the STE20 kinases, such as STK24 and STK26. Interacts with CTTNBP2; this interaction may regulate dendritic spine distribution of STRN. Activation of glutamate receptors weakens the interaction with CTTNBP2. In terms of tissue distribution, preferentially expressed in brain.

It localises to the cytoplasm. Its subcellular location is the membrane. It is found in the cell projection. The protein resides in the dendritic spine. Its function is as follows. Calmodulin-binding scaffolding protein which is the center of the striatin-interacting phosphatase and kinase (STRIPAK) complexes. STRIPAK complexes have critical roles in protein (de)phosphorylation and are regulators of multiple signaling pathways including Hippo, MAPK, nuclear receptor and cytoskeleton remodeling. Different types of STRIPAK complexes are involved in a variety of biological processes such as cell growth, differentiation, apoptosis, metabolism and immune regulation. The chain is Striatin (STRN) from Homo sapiens (Human).